Reading from the N-terminus, the 111-residue chain is Large ribosomal subunit protein uL22 (111 aa).

This sequence belongs to the universal ribosomal protein uL22 family. In terms of assembly, part of the 50S ribosomal subunit.

Its function is as follows. This protein binds specifically to 23S rRNA; its binding is stimulated by other ribosomal proteins, e.g. L4, L17, and L20. It is important during the early stages of 50S assembly. It makes multiple contacts with different domains of the 23S rRNA in the assembled 50S subunit and ribosome. Functionally, the globular domain of the protein is located near the polypeptide exit tunnel on the outside of the subunit, while an extended beta-hairpin is found that lines the wall of the exit tunnel in the center of the 70S ribosome. This is Large ribosomal subunit protein uL22 from Chlamydia trachomatis serovar L2 (strain ATCC VR-902B / DSM 19102 / 434/Bu).